The primary structure comprises 143 residues: uncharacterized protein (143 aa).

Residues M1 to V14 show a composition bias toward basic and acidic residues. The tract at residues M1–D25 is disordered.

This is an uncharacterized protein from Pseudoalteromonas phage PM2 (Bacteriophage PM2).